The chain runs to 137 residues: 2-iminobutanoate/2-iminopropanoate deaminase (137 aa).

At serine 2 the chain carries N-acetylserine. Lysine 13, lysine 60, and lysine 67 each carry N6-succinyllysine. Residue threonine 74 is modified to Phosphothreonine.

Belongs to the RutC family. Homotrimer. Interacts with YTHDF2. As to expression, liver and kidney.

Its subcellular location is the cytoplasm. The protein localises to the nucleus. It localises to the peroxisome. The protein resides in the mitochondrion. The enzyme catalyses 2-iminobutanoate + H2O = 2-oxobutanoate + NH4(+). It catalyses the reaction 2-iminopropanoate + H2O = pyruvate + NH4(+). Its function is as follows. Catalyzes the hydrolytic deamination of enamine/imine intermediates that form during the course of normal metabolism. May facilitate the release of ammonia from these potentially toxic reactive metabolites, reducing their impact on cellular components. It may act on enamine/imine intermediates formed by several types of pyridoxal-5'-phosphate-dependent dehydratases including L-threonine dehydratase. In terms of biological role, also promotes endoribonucleolytic cleavage of some transcripts by promoting recruitment of the ribonuclease P/MRP complex. Acts by bridging YTHDF2 and the ribonuclease P/MRP complex. RIDA/HRSP12 binds to N6-methyladenosine (m6A)-containing mRNAs containing a 5'-GGUUC-3' motif: cooperative binding of RIDA/HRSP12 and YTHDF2 to such transcripts lead to recruitment of the ribonuclease P/MRP complex and subsequent endoribonucleolytic cleavage. This is 2-iminobutanoate/2-iminopropanoate deaminase from Rattus norvegicus (Rat).